A 127-amino-acid polypeptide reads, in one-letter code: RxLR effector protein CRE6 (127 aa).

An N-terminal signal peptide occupies residues 1 to 19 (MIRNALLVLVFVLIGTISA). A RxLR-dEER motif is present at residues 48 to 67 (RLLRQGSVKEGGVHDATEER).

It belongs to the RxLR effector family.

It localises to the secreted. The protein localises to the host cell. Functionally, effector that is involved in host plant infection. Contributes to virulence during the early infection stage, by inhibiting plant defense responses induced by both PAMP-triggered immunity (PTI) and effector-triggered immunity (ETI). This Phytophthora infestans (strain T30-4) (Potato late blight agent) protein is RxLR effector protein CRE6.